A 932-amino-acid polypeptide reads, in one-letter code: 2-oxoglutarate dehydrogenase E1 component (932 aa).

The protein belongs to the alpha-ketoglutarate dehydrogenase family. Homodimer. Part of the 2-oxoglutarate dehydrogenase (OGDH) complex composed of E1 (2-oxoglutarate dehydrogenase), E2 (dihydrolipoamide succinyltransferase) and E3 (dihydrolipoamide dehydrogenase); the complex contains multiple copies of the three enzymatic components (E1, E2 and E3). Thiamine diphosphate is required as a cofactor.

The enzyme catalyses N(6)-[(R)-lipoyl]-L-lysyl-[protein] + 2-oxoglutarate + H(+) = N(6)-[(R)-S(8)-succinyldihydrolipoyl]-L-lysyl-[protein] + CO2. Its function is as follows. E1 component of the 2-oxoglutarate dehydrogenase (OGDH) complex which catalyzes the decarboxylation of 2-oxoglutarate, the first step in the conversion of 2-oxoglutarate to succinyl-CoA and CO(2). This Staphylococcus aureus (strain MW2) protein is 2-oxoglutarate dehydrogenase E1 component.